A 91-amino-acid polypeptide reads, in one-letter code: Probable Fe(2+)-trafficking protein (91 aa).

Belongs to the Fe(2+)-trafficking protein family.

In terms of biological role, could be a mediator in iron transactions between iron acquisition and iron-requiring processes, such as synthesis and/or repair of Fe-S clusters in biosynthetic enzymes. The polypeptide is Probable Fe(2+)-trafficking protein (Glaesserella parasuis serovar 5 (strain SH0165) (Haemophilus parasuis)).